The primary structure comprises 1441 residues: Actin cytoskeleton-regulatory complex protein PAN1 (1441 aa).

Over residues 1 to 23 (MYSNPNSFLGGNSQRPGQPQYGN) the composition is skewed to polar residues. The tract at residues 1–150 (MYSNPNSFLG…PPMKPQPTGF (150 aa)) is disordered. The segment covering 24–38 (QFGAGAGQPQLQQPG) has biased composition (low complexity). 2 stretches are compositionally biased toward polar residues: residues 46-58 (GFGQ…QQYT) and 66-87 (PQPT…QQNV). Positions 97–137 (MPQQFQQQFQQQQQQFQQQPQQTSSPFGAAPSQQPPASALA) are enriched in low complexity. In terms of domain architecture, EH 1 spans 188-277 (DQAKFETLFK…ENIKNEVSSM (90 aa)). The 36-residue stretch at 221–256 (LDGDSLSHIWTLADTTRSGQLHFPEFALAMYLCNLK) folds into the EF-hand 1 domain. Residues 292 to 303 (ASDSGIRQNTAT) are compositionally biased toward polar residues. The segment at 292–316 (ASDSGIRQNTATPPVIQHPQPQPSN) is disordered. One can recognise an EH 2 domain in the interval 440–529 (EKTRYDSLFR…PELVPPSTRN (90 aa)). Positions 473–508 (LEKPDLERVWTLADNGNKGRLDMDEFAVAMHLIYRK) constitute an EF-hand 2 domain. The disordered stretch occupies residues 594-622 (GYRSSARRRVGNNSPRPESPASVNSSEEL). The segment covering 604-621 (GNNSPRPESPASVNSSEE) has biased composition (polar residues). 2 coiled-coil regions span residues 618 to 735 (SSEE…LRDA) and 791 to 820 (KRLE…SVRE). Disordered regions lie at residues 824–845 (GIED…KRRW) and 867–1441 (RAAR…RVLD). A compositionally biased stretch (low complexity) spans 891-911 (APPSARSVSPAVSRTSTPSAP). 2 coiled-coil regions span residues 956–997 (ETAA…ETGA) and 1028–1143 (RRAE…DVED). Over residues 961-993 (RMERERAERAAKLRQAEEEDARREAERQARIAE) the composition is skewed to basic and acidic residues. Low complexity predominate over residues 994–1008 (ETGAPAPAAQAAVPK). Basic and acidic residues-rich tracts occupy residues 1023 to 1098 (PKVD…EEEK) and 1107 to 1137 (EAKE…KQLE). Residues 1139–1152 (LDVEDSSSDDDEGP) are compositionally biased toward acidic residues. Residues 1155 to 1166 (ITPQASTPTLGG) show a composition bias toward polar residues. 2 stretches are compositionally biased toward pro residues: residues 1177-1189 (PAPP…PVQS) and 1219-1236 (PAPP…PPQP). A compositionally biased stretch (basic and acidic residues) spans 1262 to 1272 (KRPEDDGWGSD). Residues 1273-1282 (KEDDDEDSDD) show a composition bias toward acidic residues. Residues 1313 to 1324 (SAAASPPVTSPV) are compositionally biased toward low complexity. Over residues 1340-1402 (PPAPPPPPPM…PPPGGAPAPA (63 aa)) the composition is skewed to pro residues.

It belongs to the PAN1 family. As to quaternary structure, component of the PAN1 actin cytoskeleton-regulatory complex.

Its subcellular location is the cell membrane. The protein localises to the endosome membrane. The protein resides in the cytoplasm. It localises to the cytoskeleton. It is found in the actin patch. Functionally, component of the PAN1 actin cytoskeleton-regulatory complex required for the internalization of endosomes during actin-coupled endocytosis. The complex links the site of endocytosis to the cell membrane-associated actin cytoskeleton. Mediates uptake of external molecules and vacuolar degradation of plasma membrane proteins. Plays a role in the proper organization of the cell membrane-associated actin cytoskeleton and promotes its destabilization. This chain is Actin cytoskeleton-regulatory complex protein PAN1 (PAN1), found in Podospora anserina (strain S / ATCC MYA-4624 / DSM 980 / FGSC 10383) (Pleurage anserina).